Consider the following 1227-residue polypeptide: RNA-binding protein 20 (1227 aa).

2 disordered regions span residues 1-58 (MVLA…QAGL) and 289-374 (GSHV…SKQG). Positions 27 to 42 (PGARASPAPSGPRGMQ) are enriched in low complexity. Over residues 43–56 (QPPPPPQPPPPPQA) the composition is skewed to pro residues. Over residues 313–331 (QGTNSQWESPHGFSGQSKP) the composition is skewed to polar residues. The U1-type zinc-finger motif lies at 409 to 443 (HLPHICSICDKKVFDLKDWELHVKGKLHAQKCLVF). Residue Ser-498 is modified to Phosphoserine. The region spanning 518 to 593 (RVVHICNLPE…EKLLIRMSKR (76 aa)) is the RRM domain. Positions 624-634 (EADRYGPERPR) are enriched in basic and acidic residues. Disordered regions lie at residues 624 to 906 (EADR…TNME) and 977 to 1089 (SLKS…ASPP). Positions 628 to 655 (YGPERPRSRSPVSRSLSPRSHTPSFTSC) are RS. Phosphoserine is present on residues Ser-635, Ser-637, Ser-640, Ser-642, Ser-660, and Ser-679. Low complexity predominate over residues 636 to 660 (RSPVSRSLSPRSHTPSFTSCSSSHS). Composition is skewed to basic and acidic residues over residues 674–709 (DSWE…PWAH) and 716–738 (RQLD…EKYP). Positions 741-752 (GSPNLPHSVSSY) are enriched in polar residues. Ser-742 is modified (phosphoserine). Basic and acidic residues-rich tracts occupy residues 753 to 772 (KSRE…DKYL), 784 to 807 (RKDE…EDGL), and 816 to 856 (EGAK…KEEQ). At Ser-801 the chain carries Phosphoserine. 7 positions are modified to phosphoserine: Ser-865, Ser-876, Ser-891, Ser-893, Ser-977, Ser-980, and Ser-1013. Positions 868 to 888 (RQEKEAEFSDPENTRTKKEQD) are enriched in basic and acidic residues. A compositionally biased stretch (basic and acidic residues) spans 1024 to 1036 (CYEKEAKGVESSD). Phosphoserine is present on residues Ser-1048, Ser-1060, Ser-1080, Ser-1115, and Ser-1120. Residues 1161-1192 (FYCKLCGLFYTSEETAKMSHCRSAVHYRNLQK) form a Matrin-type zinc finger. The segment covering 1201-1215 (GLKETEGADSPRPED) has biased composition (basic and acidic residues). Residues 1201 to 1227 (GLKETEGADSPRPEDSGIVPRFERKKL) form a disordered region. Ser-1210 is subject to Phosphoserine.

As to quaternary structure, associates with components of the U1 and U2 U1 small nuclear ribonucleoprotein complexes. In terms of processing, phosphorylation regulates the subcellular localization. Phosphorylation of Ser-635 and Ser-637 in the RS (arginine/serine-rich) region promotes nuclear localization of the protein. In contrast, phosphorylation of the C-terminal disordered region promotes localization to cytoplasmic ribonucleoprotein granules. Mainly expressed in the heart. Also expressed in skeletal muscle tissues, ovary, small intestine and colon.

It localises to the nucleus. It is found in the cytoplasm. The protein localises to the cytoplasmic ribonucleoprotein granule. Its function is as follows. RNA-binding protein that acts as a regulator of mRNA splicing of a subset of genes encoding key structural proteins involved in cardiac development, such as TTN (Titin), CACNA1C, CAMK2D or PDLIM5/ENH. Acts as a repressor of mRNA splicing: specifically binds the 5'UCUU-3' motif that is predominantly found within intronic sequences of pre-mRNAs, leading to the exclusion of specific exons in target transcripts. RBM20-mediated exon skipping is hormone-dependent and is essential for TTN isoform transition in both cardiac and skeletal muscles. RBM20-mediated exon skipping of TTN provides substrates for the formation of circular RNA (circRNAs) from the TTN transcripts. Together with RBM24, promotes the expression of short isoforms of PDLIM5/ENH in cardiomyocytes. This Homo sapiens (Human) protein is RNA-binding protein 20.